We begin with the raw amino-acid sequence, 35 residues long: Photosystem II reaction center protein T (35 aa).

A helical transmembrane segment spans residues 3–23 (ALVYTFLLVSTLGIIFFAIFF).

Belongs to the PsbT family. In terms of assembly, PSII is composed of 1 copy each of membrane proteins PsbA, PsbB, PsbC, PsbD, PsbE, PsbF, PsbH, PsbI, PsbJ, PsbK, PsbL, PsbM, PsbT, PsbY, PsbZ, Psb30/Ycf12, at least 3 peripheral proteins of the oxygen-evolving complex and a large number of cofactors. It forms dimeric complexes.

It is found in the plastid. The protein resides in the chloroplast thylakoid membrane. Found at the monomer-monomer interface of the photosystem II (PS II) dimer, plays a role in assembly and dimerization of PSII. PSII is a light-driven water plastoquinone oxidoreductase, using light energy to abstract electrons from H(2)O, generating a proton gradient subsequently used for ATP formation. In Taxus brevifolia (Pacific yew), this protein is Photosystem II reaction center protein T.